The chain runs to 277 residues: Urease accessory protein UreD (277 aa).

The protein belongs to the UreD family. As to quaternary structure, ureD, UreF and UreG form a complex that acts as a GTP-hydrolysis-dependent molecular chaperone, activating the urease apoprotein by helping to assemble the nickel containing metallocenter of UreC. The UreE protein probably delivers the nickel.

The protein localises to the cytoplasm. Required for maturation of urease via the functional incorporation of the urease nickel metallocenter. The protein is Urease accessory protein UreD of Yersinia pestis (strain Pestoides F).